Here is a 588-residue protein sequence, read N- to C-terminus: Calicin (588 aa).

The 71-residue stretch at 28–98 (WDIALTVDHH…FYSGKVVISE (71 aa)) folds into the BTB domain. At Ser149 the chain carries Phosphoserine. 6 Kelch repeats span residues 280–327 (SVVI…SAGR), 328–375 (YIYI…TCGG), 377–423 (VYSV…TRGD), 425–475 (NLYI…SFHQ), 476–525 (DNIL…VGDN), and 526–580 (KVFV…LAKL).

Interacts with CYLC1; the interaction may be relevant for proper acrosome attachment to the nuclear envelope. Expressed in testis and in spermatozoa (at protein level).

Its subcellular location is the cytoplasm. The protein localises to the cytoskeleton. The protein resides in the perinuclear theca. It is found in the calyx. In terms of biological role, required for both nuclear and acrosomal shaping during spermiogenesis. This Bos taurus (Bovine) protein is Calicin (CCIN).